Consider the following 200-residue polypeptide: MELMVKGADALTVSETTFGRDFNEALVHQVVVAYAAGARQGTRAQKTRSEVSGGGAKPWRQKGTGRARAGTIRSPIWRTGGVTFAAKPQDHSQKVNKKMYRGAMKSILSELIRQERLIVVDNFSVEAPKTKELVAKLKELELNDVLIVTGEVDENLFLAARNLYKVDARDVAGVDPVSLIAFDKVLMTADAVKQVEEMLA.

The interval 42-65 (TRAQKTRSEVSGGGAKPWRQKGTG) is disordered.

The protein belongs to the universal ribosomal protein uL4 family. Part of the 50S ribosomal subunit.

Functionally, one of the primary rRNA binding proteins, this protein initially binds near the 5'-end of the 23S rRNA. It is important during the early stages of 50S assembly. It makes multiple contacts with different domains of the 23S rRNA in the assembled 50S subunit and ribosome. Its function is as follows. Forms part of the polypeptide exit tunnel. The chain is Large ribosomal subunit protein uL4 from Vibrio atlanticus (strain LGP32) (Vibrio splendidus (strain Mel32)).